The following is a 284-amino-acid chain: Phosphatidylglycerol--prolipoprotein diacylglyceryl transferase (284 aa).

7 helical membrane passes run 14-34 (IAFS…ACAI), 62-82 (YFLW…ILIY), 106-126 (FVGI…IASY), 136-156 (LLIY…FGRI), 190-210 (PSQL…VMWA), 218-238 (GLLI…AEFY), and 252-272 (LSMG…ILLY). Residue Arg155 participates in a 1,2-diacyl-sn-glycero-3-phospho-(1'-sn-glycerol) binding.

The protein belongs to the Lgt family.

The protein resides in the cell inner membrane. The enzyme catalyses L-cysteinyl-[prolipoprotein] + a 1,2-diacyl-sn-glycero-3-phospho-(1'-sn-glycerol) = an S-1,2-diacyl-sn-glyceryl-L-cysteinyl-[prolipoprotein] + sn-glycerol 1-phosphate + H(+). The protein operates within protein modification; lipoprotein biosynthesis (diacylglyceryl transfer). Catalyzes the transfer of the diacylglyceryl group from phosphatidylglycerol to the sulfhydryl group of the N-terminal cysteine of a prolipoprotein, the first step in the formation of mature lipoproteins. The polypeptide is Phosphatidylglycerol--prolipoprotein diacylglyceryl transferase (Helicobacter pylori (strain ATCC 700392 / 26695) (Campylobacter pylori)).